Here is a 161-residue protein sequence, read N- to C-terminus: 2-C-methyl-D-erythritol 2,4-cyclodiphosphate synthase (161 aa).

A divalent metal cation contacts are provided by aspartate 11 and histidine 13. Residues 11–13 and 37–38 each bind 4-CDP-2-C-methyl-D-erythritol 2-phosphate; these read DIH and HS. Histidine 45 lines the a divalent metal cation pocket. 4-CDP-2-C-methyl-D-erythritol 2-phosphate-binding positions include 59 to 61, 135 to 138, and arginine 145; these read DIG and TTNE.

It belongs to the IspF family. As to quaternary structure, homotrimer. A divalent metal cation is required as a cofactor.

It carries out the reaction 4-CDP-2-C-methyl-D-erythritol 2-phosphate = 2-C-methyl-D-erythritol 2,4-cyclic diphosphate + CMP. It functions in the pathway isoprenoid biosynthesis; isopentenyl diphosphate biosynthesis via DXP pathway; isopentenyl diphosphate from 1-deoxy-D-xylulose 5-phosphate: step 4/6. In terms of biological role, involved in the biosynthesis of isopentenyl diphosphate (IPP) and dimethylallyl diphosphate (DMAPP), two major building blocks of isoprenoid compounds. Catalyzes the conversion of 4-diphosphocytidyl-2-C-methyl-D-erythritol 2-phosphate (CDP-ME2P) to 2-C-methyl-D-erythritol 2,4-cyclodiphosphate (ME-CPP) with a corresponding release of cytidine 5-monophosphate (CMP). The chain is 2-C-methyl-D-erythritol 2,4-cyclodiphosphate synthase from Cyanothece sp. (strain PCC 7425 / ATCC 29141).